The primary structure comprises 329 residues: DNA repair and recombination protein RadA (329 aa).

107 to 114 is an ATP binding site; it reads GEFGSGKS.

Belongs to the eukaryotic RecA-like protein family.

Involved in DNA repair and in homologous recombination. Binds and assemble on single-stranded DNA to form a nucleoprotein filament. Hydrolyzes ATP in a ssDNA-dependent manner and promotes DNA strand exchange between homologous DNA molecules. The protein is DNA repair and recombination protein RadA of Methanocorpusculum labreanum (strain ATCC 43576 / DSM 4855 / Z).